The primary structure comprises 485 residues: Glutamyl-tRNA(Gln) amidotransferase subunit A (485 aa).

Residues K79 and S154 each act as charge relay system in the active site. The active-site Acyl-ester intermediate is the S178.

This sequence belongs to the amidase family. GatA subfamily. Heterotrimer of A, B and C subunits.

It carries out the reaction L-glutamyl-tRNA(Gln) + L-glutamine + ATP + H2O = L-glutaminyl-tRNA(Gln) + L-glutamate + ADP + phosphate + H(+). In terms of biological role, allows the formation of correctly charged Gln-tRNA(Gln) through the transamidation of misacylated Glu-tRNA(Gln) in organisms which lack glutaminyl-tRNA synthetase. The reaction takes place in the presence of glutamine and ATP through an activated gamma-phospho-Glu-tRNA(Gln). This chain is Glutamyl-tRNA(Gln) amidotransferase subunit A, found in Staphylococcus aureus.